The chain runs to 482 residues: Protein translocase subunit SecY (482 aa).

The tract at residues 1–22 (MVIKKPANKVDKKSTFKSSNKK) is disordered. The next 10 membrane-spanning stretches (helical) occupy residues 41 to 61 (ILFT…TVPG), 92 to 112 (FSIL…VQLL), 137 to 157 (LTKI…IFTL), 177 to 197 (AFYY…MLWI), 201 to 221 (ITIK…IIIS), 243 to 263 (IFFS…LVIL), 303 to 323 (VIPV…SQII), 342 to 362 (FNTW…TFLY), 405 to 425 (VVGS…SKLT), and 426 to 446 (QLPS…SVAI).

This sequence belongs to the SecY/SEC61-alpha family. As to quaternary structure, component of the Sec protein translocase complex. Heterotrimer consisting of SecY, SecE and SecG subunits. The heterotrimers can form oligomers, although 1 heterotrimer is thought to be able to translocate proteins. Interacts with the ribosome. Interacts with SecDF, and other proteins may be involved. Interacts with SecA.

The protein resides in the cell membrane. The central subunit of the protein translocation channel SecYEG. Consists of two halves formed by TMs 1-5 and 6-10. These two domains form a lateral gate at the front which open onto the bilayer between TMs 2 and 7, and are clamped together by SecE at the back. The channel is closed by both a pore ring composed of hydrophobic SecY resides and a short helix (helix 2A) on the extracellular side of the membrane which forms a plug. The plug probably moves laterally to allow the channel to open. The ring and the pore may move independently. The protein is Protein translocase subunit SecY of Mycoplasma capricolum subsp. capricolum (strain California kid / ATCC 27343 / NCTC 10154).